A 216-amino-acid polypeptide reads, in one-letter code: Nucleoside triphosphate pyrophosphatase (216 aa).

The active-site Proton acceptor is the D82.

This sequence belongs to the Maf family. Requires a divalent metal cation as cofactor.

It localises to the cytoplasm. It catalyses the reaction a ribonucleoside 5'-triphosphate + H2O = a ribonucleoside 5'-phosphate + diphosphate + H(+). The enzyme catalyses a 2'-deoxyribonucleoside 5'-triphosphate + H2O = a 2'-deoxyribonucleoside 5'-phosphate + diphosphate + H(+). Its function is as follows. Nucleoside triphosphate pyrophosphatase. May have a dual role in cell division arrest and in preventing the incorporation of modified nucleotides into cellular nucleic acids. The protein is Nucleoside triphosphate pyrophosphatase of Mycobacterium ulcerans (strain Agy99).